Here is a 394-residue protein sequence, read N- to C-terminus: Probable aspartate/prephenate aminotransferase (394 aa).

L-aspartate-binding residues include Gly-40, Trp-126, and Asn-176. An N6-(pyridoxal phosphate)lysine modification is found at Lys-239. Arg-370 serves as a coordination point for L-aspartate.

Belongs to the class-I pyridoxal-phosphate-dependent aminotransferase family. In terms of assembly, homodimer. Pyridoxal 5'-phosphate is required as a cofactor.

It localises to the cytoplasm. The catalysed reaction is L-aspartate + 2-oxoglutarate = oxaloacetate + L-glutamate. It catalyses the reaction L-arogenate + oxaloacetate = prephenate + L-aspartate. Its function is as follows. Catalyzes the reversible conversion of aspartate and 2-oxoglutarate to glutamate and oxaloacetate. Can also transaminate prephenate in the presence of aspartate. The protein is Probable aspartate/prephenate aminotransferase (aspC) of Aquifex aeolicus (strain VF5).